Reading from the N-terminus, the 284-residue chain is UDP-N-acetylenolpyruvoylglucosamine reductase (284 aa).

Residues 12 to 174 (KIGGRVKYLV…TRVMMSFKRE (163 aa)) form the FAD-binding PCMH-type domain. Arg153 is an active-site residue. Catalysis depends on Ser203, which acts as the Proton donor. Residue Glu274 is part of the active site.

It belongs to the MurB family. It depends on FAD as a cofactor.

The protein resides in the cytoplasm. It carries out the reaction UDP-N-acetyl-alpha-D-muramate + NADP(+) = UDP-N-acetyl-3-O-(1-carboxyvinyl)-alpha-D-glucosamine + NADPH + H(+). Its pathway is cell wall biogenesis; peptidoglycan biosynthesis. Its function is as follows. Cell wall formation. This is UDP-N-acetylenolpyruvoylglucosamine reductase from Thermotoga petrophila (strain ATCC BAA-488 / DSM 13995 / JCM 10881 / RKU-1).